The sequence spans 840 residues: Cytosolic carboxypeptidase 2 (840 aa).

Residues 358 to 628 enclose the Peptidase M14 domain; the sequence is YPYTYTDLQC…HVCDTLLDFC (271 aa). Positions 424, 427, and 520 each coordinate Zn(2+). Glutamate 592 serves as the catalytic Proton donor/acceptor. The span at 706-719 shows a compositional bias: basic residues; the sequence is MFKKKKKKSLQTRK. Disordered regions lie at residues 706-726 and 758-789; these read MFKK…EQYQ and ESSS…LDPS.

Belongs to the peptidase M14 family. As to quaternary structure, interacts with RARRES1, KIF11 and MAPRE1. It depends on Zn(2+) as a cofactor.

The protein localises to the cytoplasm. The protein resides in the cytosol. Its subcellular location is the cytoskeleton. It localises to the microtubule organizing center. It is found in the centrosome. The protein localises to the centriole. The protein resides in the cilium basal body. The catalysed reaction is (L-glutamyl)(n+1)-gamma-L-glutamyl-L-glutamyl-[protein] + H2O = (L-glutamyl)(n)-gamma-L-glutamyl-L-glutamyl-[protein] + L-glutamate. Inhibited by RARRES1. Its function is as follows. Metallocarboxypeptidase that mediates deglutamylation of tubulin and non-tubulin target proteins. Catalyzes the removal of polyglutamate side chains present on the gamma-carboxyl group of glutamate residues within the C-terminal tail of tubulin protein. Specifically cleaves tubulin long-side-chains, while it is not able to remove the branching point glutamate. Also catalyzes the removal of polyglutamate residues from the carboxy-terminus of non-tubulin proteins such as MYLK. This is Cytosolic carboxypeptidase 2 (AGBL2) from Macaca fascicularis (Crab-eating macaque).